Reading from the N-terminus, the 179-residue chain is Large ribosomal subunit protein uL5 (179 aa).

Belongs to the universal ribosomal protein uL5 family. Part of the 50S ribosomal subunit; part of the 5S rRNA/L5/L18/L25 subcomplex. Contacts the 5S rRNA and the P site tRNA. Forms a bridge to the 30S subunit in the 70S ribosome.

In terms of biological role, this is one of the proteins that bind and probably mediate the attachment of the 5S RNA into the large ribosomal subunit, where it forms part of the central protuberance. In the 70S ribosome it contacts protein S13 of the 30S subunit (bridge B1b), connecting the 2 subunits; this bridge is implicated in subunit movement. Contacts the P site tRNA; the 5S rRNA and some of its associated proteins might help stabilize positioning of ribosome-bound tRNAs. In Clostridium botulinum (strain Alaska E43 / Type E3), this protein is Large ribosomal subunit protein uL5.